Consider the following 525-residue polypeptide: ESX-1 secretion-associated protein EspE (525 aa).

2 disordered regions span residues 244–341 and 375–494; these read AVAG…PGAA and ALQA…APVH. The segment covering 248 to 258 has biased composition (acidic residues); it reads DADDTTADDTA. The span at 274 to 286 shows a compositional bias: basic and acidic residues; it reads ETSKEDGQSRHEN. Residues 292 to 306 show a composition bias toward gly residues; that stretch reads SGGGGGATSGGGGGA. Composition is skewed to low complexity over residues 307–319, 332–341, and 375–397; these read PSSASSAGPAGTP, TPTDAQPGAA, and ALQAATQAGAQAAQLAGQAAAAP. Positions 411 to 440 are enriched in basic and acidic residues; sequence DPDAEGDKDSDKRDGEGKEDGTAPRDREST.

It localises to the cytoplasm. This is ESX-1 secretion-associated protein EspE from Mycolicibacterium smegmatis (strain ATCC 700084 / mc(2)155) (Mycobacterium smegmatis).